We begin with the raw amino-acid sequence, 5538 residues long: Leashin (5538 aa).

A compositionally biased stretch (gly residues) spans 1–10; it reads MFRALMGGGR. 22 disordered regions span residues 1–270, 286–315, 331–365, 510–555, 596–712, 800–901, 913–944, 1027–1145, 1164–1297, 1310–1398, 1432–1993, 2067–2146, 2165–2207, 2233–3065, 3077–3894, 3910–4034, 4072–4128, 4238–4421, 4442–4463, 4509–4698, 4733–4850, and 4910–5052; these read MFRA…SSMG, EVDPAPGRPDRPTAGTTSEPPKPSNTTFGI, LPLPASPTSPPEPVPTTAPYAPPVTSSTTKPPHTH, SRDA…KKSS, TESV…DISQ, AATS…FPTG, ALASTQDRDSRLPRQHASSSSGSLQHVAPVPT, NRPH…KDSF, VLSG…GYRD, PTPP…RYVS, EDPT…TSVE, SELL…VNAF, NRLS…SPPA, PEAA…SQPI, MAEE…EIVS, EEKA…DTGL, KFKQ…EEPL, EAAL…SNQA, PRPLEVEPAASEVYQGATDEND, LRRQ…TSNT, KTDG…VEQA, and ALTV…RHRR. Residues 1–1100 form a woronin bodies-binding region region; the sequence is MFRALMGGGR…RASGVQLIDR (1100 aa). Positions 14-23 are enriched in low complexity; sequence SRSTTSSSKS. 2 stretches are compositionally biased toward basic and acidic residues: residues 42 to 51 and 89 to 167; these read SRGDDRDRGL and VEHD…ERSR. Positions 299–313 are enriched in polar residues; it reads AGTTSEPPKPSNTTF. Residues 334–352 show a composition bias toward pro residues; it reads PASPTSPPEPVPTTAPYAP. Residues 514–523 show a composition bias toward basic residues; sequence PRKHHYRQRR. Positions 598–607 are enriched in polar residues; it reads SVSTARRSQT. Basic residues predominate over residues 639 to 655; that stretch reads HRSRSRSHSSSRNRRHS. The span at 660–674 shows a compositional bias: low complexity; it reads AAVGAAVGSGAIALA. A compositionally biased stretch (basic residues) spans 682 to 698; the sequence is SRSRSRSRFPRKSKGRK. A compositionally biased stretch (basic and acidic residues) spans 809–825; sequence RAGEILVAKETRSRHSD. Low complexity-rich tracts occupy residues 842 to 851 and 862 to 880; these read GDQSSSSVSS and GSDESQSSDSGTSKWGWRW. The segment covering 881 to 891 has biased composition (basic residues); that stretch reads GSKKNKKKKRA. Basic and acidic residues-rich tracts occupy residues 1068–1091, 1098–1145, 1178–1198, 1207–1226, 1356–1365, 1375–1387, 1447–1462, and 1478–1488; these read LTKEQADKERRMDRLEQLKRDAER, IDRD…KDSF, SQRRHEERRQQRRAERRRGSE, SKSERAQETTDYLPEERQPE, WGEHKTHEYE, SVDHETTREREQP, GRVEYRDPWVETESKS, and EEKAPSSRVIE. Low complexity predominate over residues 1506 to 1516; sequence QESSEPQTRTS. 3 stretches are compositionally biased toward basic and acidic residues: residues 1521–1536, 1549–1559, and 1572–1594; these read VIDRLSEKQDERDGSR, GKERDESELRA, and EELRSDPKRDVDSRDDGDVDRRS. Basic residues predominate over residues 1639 to 1648; the sequence is KKKRRKRRSK. 3 stretches are compositionally biased toward basic and acidic residues: residues 1672 to 1686, 1700 to 1773, and 1788 to 1800; these read EKLKSMDDKDKEKKA, EPVD…QRRE, and KSGEYEKDRKLSE. Composition is skewed to low complexity over residues 1867–1876 and 1889–1898; these read PAPRSRSRPA and SQSSRRSSIL. Positions 1950–1975 are enriched in basic and acidic residues; that stretch reads KNSREMRPLWLVERHGPGHGEHKLEE. Polar residues-rich tracts occupy residues 1984-1993 and 2121-2130; these read KTSSANTSVE and TPQNNVTAAS. Composition is skewed to basic and acidic residues over residues 2187–2196, 2269–2279, and 2307–2320; these read DADRTHKPIA, VPRDDKRRDSV, and GENKELPSEAKNEN. Over residues 2321-2331 the composition is skewed to polar residues; that stretch reads ANDNSQAQTEQ. A compositionally biased stretch (basic residues) spans 2344–2355; the sequence is AKKKKKKNKKKR. Positions 2358–2370 are enriched in polar residues; it reads MDSNTQEPTTPVD. Basic and acidic residues predominate over residues 2427-2441; it reads DVEKAIEAPDVRKEL. A compositionally biased stretch (low complexity) spans 2449-2461; sequence APEDTPAEPTAET. The span at 2473 to 2484 shows a compositional bias: basic residues; that stretch reads KKSKKKKKKKNK. Residues 2494-2525 are compositionally biased toward polar residues; that stretch reads DPASTETPEASAANSQVVAAEQVESTLETTQP. Basic and acidic residues-rich tracts occupy residues 2580–2590, 2647–2661, and 2677–2691; these read NQAKELPHPEE, PEDKNGEAEQADLKS, and ALDKELSEISERPAE. Over residues 2719–2734 the composition is skewed to low complexity; sequence EEPTPTAAELETPLSR. Basic residues predominate over residues 2735 to 2747; the sequence is KNSKKNKKKNKRK. The span at 2796 to 2812 shows a compositional bias: basic and acidic residues; it reads DENKGESRDVQAVKEET. Residues 2874–2884 show a composition bias toward basic residues; it reads KKKAKKKKNRK. Residues 2885 to 2894 are compositionally biased toward polar residues; the sequence is TANVSESQPE. Composition is skewed to basic residues over residues 3003-3013 and 3089-3100; these read KKSKKNKKKKQ and KKTKKEKKKKRQ. Residues 3145-3172 are compositionally biased toward basic and acidic residues; it reads AIEHAEAAAEHSQEQPNKDVTLHADHSP. Low complexity predominate over residues 3248-3268; the sequence is PAMEGGAAAEELVAVEPDVLE. Positions 3293 to 3303 are enriched in polar residues; the sequence is ELVNAETTQKT. The segment covering 3329–3341 has biased composition (basic residues); sequence SKKKDKKKKKKRQ. Residues 3347-3367 show a composition bias toward basic and acidic residues; sequence DEQRSSTKEEPTAEFSSDHVP. 2 stretches are compositionally biased toward low complexity: residues 3397-3409 and 3422-3435; these read TQTAAEPTPSSAS and ESTQEPAAEEAQTA. Positions 3436-3450 are enriched in basic residues; that stretch reads KSKKKAKKDKKKRKS. Residues 3480–3495 show a composition bias toward basic and acidic residues; that stretch reads EGPKPGDKPTSPKDSS. Residues 3547–3564 are compositionally biased toward low complexity; sequence EEQAVVEETVAPPVVDEA. Polar residues-rich tracts occupy residues 3565-3580 and 3604-3613; these read SQLQEQKVSSETLWSE and VSPSLENNEG. Basic residues-rich tracts occupy residues 3642 to 3652 and 3716 to 3730; these read KSKKNKKKKKR and KAKKKAKKKDKKRQS. The span at 3768–3787 shows a compositional bias: polar residues; that stretch reads TFSQETSETISTEAKSSEPS. The span at 3800–3819 shows a compositional bias: basic and acidic residues; it reads KENQSHDTEPHGGNDKDLTW. The span at 3823–3837 shows a compositional bias: polar residues; it reads MVSSQVEQQQGTPSD. The span at 3876–3893 shows a compositional bias: basic and acidic residues; it reads DRLERSGEEGTRVKKEIV. Composition is skewed to polar residues over residues 3915–3925 and 3965–3980; these read ISSQGEDTIQV and KDQFTSIEVNDPSQSK. The segment covering 4010–4020 has biased composition (acidic residues); it reads TSQDDSVDAVQ. A compositionally biased stretch (basic and acidic residues) spans 4111–4123; it reads ESRENKFKEKQLA. A compositionally biased stretch (basic residues) spans 4244-4255; the sequence is KNSKKKSKKAKK. Over residues 4328–4345 the composition is skewed to polar residues; that stretch reads LGQTPNMDNQTDDVQSTE. Basic residues predominate over residues 4378–4391; the sequence is KLSKKDRRKAKKKS. Positions 4392-4406 are enriched in basic and acidic residues; it reads AKDAIEPSDEPELRN. Residues 4495-5538 are septal pore-binding region; that stretch reads AIAEFDETAI…SSTMDISNVI (1044 aa). The segment covering 4554–4570 has biased composition (polar residues); it reads TEQSAGLQAKSVSSQGA. Composition is skewed to basic and acidic residues over residues 4574-4591 and 4660-4673; these read IQDDMQHPENRLARDQTK and EESHLQSQQDEKGP. The segment covering 4940 to 4954 has biased composition (low complexity); it reads SSVSSVKSVQSTHSV. A compositionally biased stretch (polar residues) spans 4966 to 4988; it reads RNTSGDLRAASQAQESHGTQPHA. Residues 4989–4998 show a composition bias toward pro residues; sequence TPQPPQPPPS. The stretch at 5050–5223 forms a coiled coil; that stretch reads HRRSMQHLQE…QQQIAASLHD (174 aa).

In terms of assembly, binds directly or indirectly to the Woronin body major protein hexA.

It is found in the cell septum. In terms of biological role, acts as the tether and is essential for anchoring of Woronin bodies at the septal pore. In damaged hyphae, Woronin bodies occlude septal pores in order to separate intact from damaged compartments. The chain is Leashin from Aspergillus fumigatus (strain ATCC MYA-4609 / CBS 101355 / FGSC A1100 / Af293) (Neosartorya fumigata).